Consider the following 452-residue polypeptide: Probable ECA polymerase (452 aa).

Transmembrane regions (helical) follow at residues 6 to 26, 37 to 57, 63 to 83, 118 to 138, 155 to 175, 181 to 201, 207 to 227, 228 to 248, 341 to 361, 378 to 398, and 410 to 430; these read FSGL…LTWF, VFFS…TSVL, VGVA…CFYG, VILM…NGFL, GVAL…VYFL, AWLF…MIVG, IIIA…ISLW, MLAA…LKRY, LVVM…GLII, YKAA…IVLA, and VFFL…FWLF.

It belongs to the WzyE family. In terms of assembly, probably part of a complex composed of WzxE, WzyE and WzzE.

The protein resides in the cell inner membrane. It functions in the pathway bacterial outer membrane biogenesis; enterobacterial common antigen biosynthesis. Its function is as follows. Probably involved in the polymerization of enterobacterial common antigen (ECA) trisaccharide repeat units. This Salmonella arizonae (strain ATCC BAA-731 / CDC346-86 / RSK2980) protein is Probable ECA polymerase.